The following is a 250-amino-acid chain: Triosephosphate isomerase (250 aa).

Residue 8 to 10 (NWK) participates in substrate binding. His-96 acts as the Electrophile in catalysis. The Proton acceptor role is filled by Glu-169. Substrate-binding positions include Gly-175, Ser-214, and 235-236 (GG).

It belongs to the triosephosphate isomerase family. In terms of assembly, homodimer.

The protein localises to the cytoplasm. The catalysed reaction is D-glyceraldehyde 3-phosphate = dihydroxyacetone phosphate. Its pathway is carbohydrate biosynthesis; gluconeogenesis. The protein operates within carbohydrate degradation; glycolysis; D-glyceraldehyde 3-phosphate from glycerone phosphate: step 1/1. Functionally, involved in the gluconeogenesis. Catalyzes stereospecifically the conversion of dihydroxyacetone phosphate (DHAP) to D-glyceraldehyde-3-phosphate (G3P). This chain is Triosephosphate isomerase, found in Oleidesulfovibrio alaskensis (strain ATCC BAA-1058 / DSM 17464 / G20) (Desulfovibrio alaskensis).